Here is a 289-residue protein sequence, read N- to C-terminus: E3 ubiquitin-protein ligase MARCHF5 (289 aa).

Residues 4 to 73 form an RING-CH-type zinc finger; it reads VDEPPEKHCW…PQCGTEYRIV (70 aa). The Zn(2+) site is built by C12, C15, C31, C33, H41, C44, C63, and C66. The next 4 helical transmembrane spans lie at 97–117, 137–157, 202–222, and 236–256; these read FAAA…YGAV, PLFL…GKMI, LSVS…NLVG, and TILG…YFKQ.

The protein localises to the mitochondrion outer membrane. It localises to the endoplasmic reticulum membrane. It carries out the reaction S-ubiquitinyl-[E2 ubiquitin-conjugating enzyme]-L-cysteine + [acceptor protein]-L-lysine = [E2 ubiquitin-conjugating enzyme]-L-cysteine + N(6)-ubiquitinyl-[acceptor protein]-L-lysine.. It functions in the pathway protein modification; protein ubiquitination. Functionally, mitochondrial E3 ubiquitin-protein ligase that plays a crucial role in the control of mitochondrial morphology by acting as a positive regulator of mitochondrial fission. May play a role in the prevention of cell senescence acting as a regulator of mitochondrial quality control. This is E3 ubiquitin-protein ligase MARCHF5 (marchf5) from Danio rerio (Zebrafish).